Consider the following 555-residue polypeptide: Glucose-6-phosphate isomerase (555 aa).

Glu-365 acts as the Proton donor in catalysis. Residues His-396 and Lys-522 contribute to the active site.

It belongs to the GPI family.

Its subcellular location is the cytoplasm. The enzyme catalyses alpha-D-glucose 6-phosphate = beta-D-fructose 6-phosphate. It participates in carbohydrate biosynthesis; gluconeogenesis. It functions in the pathway carbohydrate degradation; glycolysis; D-glyceraldehyde 3-phosphate and glycerone phosphate from D-glucose: step 2/4. Functionally, catalyzes the reversible isomerization of glucose-6-phosphate to fructose-6-phosphate. The chain is Glucose-6-phosphate isomerase from Psychrobacter arcticus (strain DSM 17307 / VKM B-2377 / 273-4).